The sequence spans 121 residues: Large ribosomal subunit protein uL18 (121 aa).

The protein belongs to the universal ribosomal protein uL18 family. As to quaternary structure, part of the 50S ribosomal subunit; part of the 5S rRNA/L5/L18/L25 subcomplex. Contacts the 5S and 23S rRNAs.

This is one of the proteins that bind and probably mediate the attachment of the 5S RNA into the large ribosomal subunit, where it forms part of the central protuberance. This chain is Large ribosomal subunit protein uL18, found in Caldanaerobacter subterraneus subsp. tengcongensis (strain DSM 15242 / JCM 11007 / NBRC 100824 / MB4) (Thermoanaerobacter tengcongensis).